Consider the following 552-residue polypeptide: Glycosyltransferase family 92 protein RCOM_0530710 (552 aa).

The helical; Signal-anchor transmembrane segment at Trp12–Phe34 threads the bilayer. Residues Lys277–Trp520 enclose the GT92 domain.

This sequence belongs to the glycosyltransferase 92 family.

Its subcellular location is the membrane. The protein is Glycosyltransferase family 92 protein RCOM_0530710 of Ricinus communis (Castor bean).